Here is a 779-residue protein sequence, read N- to C-terminus: ATP-dependent RNA helicase SUPV3L1, mitochondrial (779 aa).

A mitochondrion-targeting transit peptide spans Met-1–Ser-40. Lys-99 carries the N6-acetyllysine modification. The region spanning Glu-194–Tyr-334 is the Helicase ATP-binding domain. Gly-207–Thr-214 is a binding site for ATP. A Helicase C-terminal domain is found at Val-353–Ala-521. The interval Pro-650–Asp-779 is interaction with LAMTOR5, important for protein stability. The segment covering Ser-693–Ser-703 has biased composition (polar residues). Disordered regions lie at residues Ser-693–Pro-732 and Glu-754–Asp-779. Position 725 is a phosphoserine (Ser-725). The segment covering Glu-761–Asp-779 has biased composition (basic and acidic residues).

Belongs to the helicase family. Homodimer; in free form. Component of the mitochondrial degradosome (mtEXO) complex which is a heteropentamer containing 2 copies of SUPV3L1 and 3 copies of PNPT1. As part of mitochondrial degradosome complex, interacts with GRSF1 in a RNA-dependent manner; the interaction enhances the activity of the complex. Interacts with LAMTOR5/HBXIP, WRN and BLM. Mg(2+) serves as cofactor. It depends on Mn(2+) as a cofactor.

The protein resides in the nucleus. It is found in the mitochondrion matrix. Its subcellular location is the mitochondrion nucleoid. It catalyses the reaction ATP + H2O = ADP + phosphate + H(+). Its activity is regulated as follows. Helicase activity toward DNA substrate is inhibited by micromolar concentrations of 5,6-dichloro-1-(beta-D-ribofuranosyl)benzotriazole (DRBT) and 4,5,6,7-tetrabromobenzotriazole (TBBT). Helicase activity toward RNA substrate is inhibited by elevated concentrations of TBBT. Inhibited by some ring-expanded nucleoside analogs. Functionally, major helicase player in mitochondrial RNA metabolism. Component of the mitochondrial degradosome (mtEXO) complex, that degrades 3' overhang double-stranded RNA with a 3'-to-5' directionality in an ATP-dependent manner. Involved in the degradation of non-coding mitochondrial transcripts (MT-ncRNA) and tRNA-like molecules. ATPase and ATP-dependent multisubstrate helicase, able to unwind double-stranded (ds) DNA and RNA, and RNA/DNA heteroduplexes in the 5'-to-3' direction. Plays a role in the RNA surveillance system in mitochondria; regulates the stability of mature mRNAs, the removal of aberrantly formed mRNAs and the rapid degradation of non coding processing intermediates. Also implicated in recombination and chromatin maintenance pathways. May protect cells from apoptosis. Associates with mitochondrial DNA. The sequence is that of ATP-dependent RNA helicase SUPV3L1, mitochondrial (Supv3l1) from Mus musculus (Mouse).